Here is a 1219-residue protein sequence, read N- to C-terminus: Disease resistance-like protein DSC1 (1219 aa).

The TIR domain maps to 9-176 (AEFDVFLSFR…EIAVDTFKKL (168 aa)). Glu-83 is a catalytic residue. The NB-ARC domain occupies 197 to 446 (LEKLLSWEDL…DIACFFRSEN (250 aa)). 216–222 (GMVGIGK) lines the ATP pocket. 11 LRR repeats span residues 468-493 (LVDK…MAKE), 538-563 (TDKI…AFQG), 597-619 (PNEL…DFDP), 620-642 (KNLV…EKDV), 665-689 (AHNL…INCL), 690-713 (EKLI…IKTQ), 733-757 (SENV…QTFR), 759-780 (LALL…LYKL), 804-827 (MESL…MHLS), 854-877 (CSRL…IGGL), and 878-899 (SSLQ…SFNQ).

The protein belongs to the disease resistance NB-LRR family. Interacts with CAMTA3 and DSC2.

It carries out the reaction NAD(+) + H2O = ADP-D-ribose + nicotinamide + H(+). TIR-NB-LRR receptor-like protein involved in plant defense. Acts as a trigger of hypersensitive response (HR). Functions as a guard of CAMTA3, a negative regulator of immunity, during pathogen infection. The protein is Disease resistance-like protein DSC1 of Arabidopsis thaliana (Mouse-ear cress).